Consider the following 277-residue polypeptide: NH(3)-dependent NAD(+) synthetase (277 aa).

Residue 46 to 53 participates in ATP binding; it reads GISGGQDS. A Mg(2+)-binding site is contributed by Asp52. Residue Arg142 participates in deamido-NAD(+) binding. Position 162 (Thr162) interacts with ATP. Glu167 is a Mg(2+) binding site. Residues Lys175 and Asp182 each coordinate deamido-NAD(+). Residues Lys191 and Thr213 each contribute to the ATP site. 263–264 lines the deamido-NAD(+) pocket; it reads HK.

This sequence belongs to the NAD synthetase family. In terms of assembly, homodimer.

The enzyme catalyses deamido-NAD(+) + NH4(+) + ATP = AMP + diphosphate + NAD(+) + H(+). Its pathway is cofactor biosynthesis; NAD(+) biosynthesis; NAD(+) from deamido-NAD(+) (ammonia route): step 1/1. Its function is as follows. Catalyzes the ATP-dependent amidation of deamido-NAD to form NAD. Uses ammonia as a nitrogen source. The polypeptide is NH(3)-dependent NAD(+) synthetase (Corynebacterium glutamicum (strain R)).